The sequence spans 220 residues: MKRSASDSPLLFDLPLAPDFSQEQQLMKRGLKHIAGIDEAGRGPLAGPVVAAAVVLDQNDLPEGLDDSKRLTAARREALYEIILTKAITVSVASLSARSIDASDIRKAALEAMRRAVIGLTLKPCHALVDGRDVPPGLPCPGSALVKGDQRSVSIAAASIVAKVTRDRMMIRAGAAHPPYGLEIHAGYATQKHRAAIESEGPVPGLHRYTFAPIKGCFDC.

Positions 32 to 220 (KHIAGIDEAG…FAPIKGCFDC (189 aa)) constitute an RNase H type-2 domain. D38, E39, and D130 together coordinate a divalent metal cation.

It belongs to the RNase HII family. Mn(2+) serves as cofactor. The cofactor is Mg(2+).

It localises to the cytoplasm. It carries out the reaction Endonucleolytic cleavage to 5'-phosphomonoester.. Functionally, endonuclease that specifically degrades the RNA of RNA-DNA hybrids. The polypeptide is Ribonuclease HII (Brucella abortus (strain 2308)).